Consider the following 599-residue polypeptide: UPF0313 protein UNCMA_01890 (599 aa).

Residues 281–557 (EDIPALRTVR…RALLQYKNPE (277 aa)) enclose the Radical SAM core domain. [4Fe-4S] cluster contacts are provided by Cys-299, Cys-303, and Cys-306.

Belongs to the UPF0313 family. The cofactor is [4Fe-4S] cluster.

This Methanocella arvoryzae (strain DSM 22066 / NBRC 105507 / MRE50) protein is UPF0313 protein UNCMA_01890.